The chain runs to 346 residues: MIREALQKLVGGEDLEQHEAEAVMAEIMDGEATSAQIGALLAGLRLKKETAAEIRGFARAMRARAEQVPTRHELVADTCGTGGDGAQTFNISTTAAFVVAGAGVPVAKHGNTAVSSRCGSADVLRHLGVNLDLTPAQMGACLDEVGIAFLFAPRLHRAMQHAAGPRKELGIRTVFNILGPLTNPVRPRVQVLGVFDAAVAELVADALAGLEVERAFVIHGAGRLDEVSLAGPAQVWEVRPGSVRAGILDPVDLGFERADVESLSGGSPADNARITLEILHGASGPRRDAVLLNAGLALLAAGRAGDAAGAVRLAAESLDSGAARERLTRLIEFTERCKHVEHDNRL.

5-phospho-alpha-D-ribose 1-diphosphate-binding positions include G80, 83-84 (GD), T88, 90-93 (NIST), 108-116 (KHGNTAVSS), and S120. An anthranilate-binding site is contributed by G80. S92 is a binding site for Mg(2+). N111 is a binding site for anthranilate. Anthranilate is bound at residue R166. Positions 225 and 226 each coordinate Mg(2+).

The protein belongs to the anthranilate phosphoribosyltransferase family. Homodimer. Requires Mg(2+) as cofactor.

The catalysed reaction is N-(5-phospho-beta-D-ribosyl)anthranilate + diphosphate = 5-phospho-alpha-D-ribose 1-diphosphate + anthranilate. The protein operates within amino-acid biosynthesis; L-tryptophan biosynthesis; L-tryptophan from chorismate: step 2/5. Functionally, catalyzes the transfer of the phosphoribosyl group of 5-phosphorylribose-1-pyrophosphate (PRPP) to anthranilate to yield N-(5'-phosphoribosyl)-anthranilate (PRA). The protein is Anthranilate phosphoribosyltransferase of Desulforudis audaxviator (strain MP104C).